Reading from the N-terminus, the 33-residue chain is Photosystem II reaction center protein Psb30 (33 aa).

A helical membrane pass occupies residues 5–25 (LIVQLGSLTLITLAGPLVVVL).

Belongs to the Psb30/Ycf12 family. As to quaternary structure, PSII is composed of 1 copy each of membrane proteins PsbA, PsbB, PsbC, PsbD, PsbE, PsbF, PsbH, PsbI, PsbJ, PsbK, PsbL, PsbM, PsbT, PsbY, PsbZ, Psb30/Ycf12, peripheral proteins of the oxygen-evolving complex and a large number of cofactors. It forms dimeric complexes.

The protein localises to the plastid. It localises to the chloroplast thylakoid membrane. A core subunit of photosystem II (PSII), probably helps stabilize the reaction center. The sequence is that of Photosystem II reaction center protein Psb30 from Euglena deses.